Consider the following 365-residue polypeptide: Phospho-N-acetylmuramoyl-pentapeptide-transferase (365 aa).

9 consecutive transmembrane segments (helical) span residues 19–39, 47–67, 91–111, 115–135, 155–175, 184–204, 224–244, 281–301, and 344–364; these read LLIL…WLLT, AVIL…FGVI, AGTP…VALI, FDPQ…IGWV, LLLQ…TGSP, GNLI…VLVA, AIAF…LMIF, AVGL…IFFV, and TQIV…GFIS.

The protein belongs to the glycosyltransferase 4 family. MraY subfamily. Mg(2+) serves as cofactor.

The protein localises to the cell inner membrane. It catalyses the reaction UDP-N-acetyl-alpha-D-muramoyl-L-alanyl-gamma-D-glutamyl-meso-2,6-diaminopimeloyl-D-alanyl-D-alanine + di-trans,octa-cis-undecaprenyl phosphate = di-trans,octa-cis-undecaprenyl diphospho-N-acetyl-alpha-D-muramoyl-L-alanyl-D-glutamyl-meso-2,6-diaminopimeloyl-D-alanyl-D-alanine + UMP. It functions in the pathway cell wall biogenesis; peptidoglycan biosynthesis. Catalyzes the initial step of the lipid cycle reactions in the biosynthesis of the cell wall peptidoglycan: transfers peptidoglycan precursor phospho-MurNAc-pentapeptide from UDP-MurNAc-pentapeptide onto the lipid carrier undecaprenyl phosphate, yielding undecaprenyl-pyrophosphoryl-MurNAc-pentapeptide, known as lipid I. The polypeptide is Phospho-N-acetylmuramoyl-pentapeptide-transferase (Gloeothece citriformis (strain PCC 7424) (Cyanothece sp. (strain PCC 7424))).